The sequence spans 411 residues: 2,3-bisphosphoglycerate-independent phosphoglycerate mutase (411 aa).

It belongs to the BPG-independent phosphoglycerate mutase family. A-PGAM subfamily.

It catalyses the reaction (2R)-2-phosphoglycerate = (2R)-3-phosphoglycerate. The protein operates within carbohydrate degradation; glycolysis; pyruvate from D-glyceraldehyde 3-phosphate: step 3/5. In terms of biological role, catalyzes the interconversion of 2-phosphoglycerate and 3-phosphoglycerate. In Thermococcus kodakarensis (strain ATCC BAA-918 / JCM 12380 / KOD1) (Pyrococcus kodakaraensis (strain KOD1)), this protein is 2,3-bisphosphoglycerate-independent phosphoglycerate mutase.